We begin with the raw amino-acid sequence, 323 residues long: Aspartate carbamoyltransferase catalytic subunit (323 aa).

Positions 61 and 62 each coordinate carbamoyl phosphate. K89 contributes to the L-aspartate binding site. The carbamoyl phosphate site is built by R111, H144, and Q147. L-aspartate contacts are provided by R184 and R238. Positions 279 and 280 each coordinate carbamoyl phosphate.

The protein belongs to the aspartate/ornithine carbamoyltransferase superfamily. ATCase family. As to quaternary structure, heterododecamer (2C3:3R2) of six catalytic PyrB chains organized as two trimers (C3), and six regulatory PyrI chains organized as three dimers (R2).

It carries out the reaction carbamoyl phosphate + L-aspartate = N-carbamoyl-L-aspartate + phosphate + H(+). The protein operates within pyrimidine metabolism; UMP biosynthesis via de novo pathway; (S)-dihydroorotate from bicarbonate: step 2/3. Functionally, catalyzes the condensation of carbamoyl phosphate and aspartate to form carbamoyl aspartate and inorganic phosphate, the committed step in the de novo pyrimidine nucleotide biosynthesis pathway. In Acaryochloris marina (strain MBIC 11017), this protein is Aspartate carbamoyltransferase catalytic subunit.